The primary structure comprises 213 residues: Octanoyltransferase (213 aa).

In terms of domain architecture, BPL/LPL catalytic spans 32-207; the sequence is DSTLDEIWLV…NILALLNNPD (176 aa). Substrate contacts are provided by residues 71-78, 138-140, and 151-153; these read RGGQVTYH, SLG, and GLA. The active-site Acyl-thioester intermediate is cysteine 169.

This sequence belongs to the LipB family.

Its subcellular location is the cytoplasm. The enzyme catalyses octanoyl-[ACP] + L-lysyl-[protein] = N(6)-octanoyl-L-lysyl-[protein] + holo-[ACP] + H(+). It functions in the pathway protein modification; protein lipoylation via endogenous pathway; protein N(6)-(lipoyl)lysine from octanoyl-[acyl-carrier-protein]: step 1/2. In terms of biological role, catalyzes the transfer of endogenously produced octanoic acid from octanoyl-acyl-carrier-protein onto the lipoyl domains of lipoate-dependent enzymes. Lipoyl-ACP can also act as a substrate although octanoyl-ACP is likely to be the physiological substrate. This is Octanoyltransferase from Escherichia coli O8 (strain IAI1).